A 649-amino-acid chain; its full sequence is Probable potassium transport system protein Kup (649 aa).

12 helical membrane passes run 1–21 (MAIV…LYTM), 42–62 (ILSL…VFIA), 84–104 (GAWL…DSVL), 126–146 (IMSG…VCLF), 159–179 (TFGT…LVNL), 195–215 (VEFL…TVFL), 235–255 (IYFT…GQGA), 286–306 (VAVL…ITGA), 334–354 (LYIP…LAMF), 364–384 (YGLA…VYIW), 390–410 (VGAV…FFAS), and 414–434 (FLHG…IMYT).

Belongs to the HAK/KUP transporter (TC 2.A.72) family.

It localises to the cell membrane. It carries out the reaction K(+)(in) + H(+)(in) = K(+)(out) + H(+)(out). Functionally, transport of potassium into the cell. Likely operates as a K(+):H(+) symporter. The protein is Probable potassium transport system protein Kup of Bifidobacterium adolescentis (strain ATCC 15703 / DSM 20083 / NCTC 11814 / E194a).